The primary structure comprises 1341 residues: Aldehyde oxidase 4 (1341 aa).

The region spanning 8 to 95 (DELIFFVNGK…GAAVTTVEGV (88 aa)) is the 2Fe-2S ferredoxin-type domain. 4 residues coordinate [2Fe-2S] cluster: cysteine 47, cysteine 52, cysteine 55, and cysteine 77. Glutamine 116 provides a ligand contact to Mo-molybdopterin. Residues cysteine 117, cysteine 120, cysteine 152, and cysteine 154 each contribute to the [2Fe-2S] cluster site. Cysteine 154 lines the Mo-molybdopterin pocket. The region spanning 239 to 424 (FQGERTTWLA…LSVFIPYSSQ (186 aa)) is the FAD-binding PCMH-type domain. FAD contacts are provided by residues 267-274 (LIMGNTTV), alanine 348, threonine 357, histidine 361, aspartate 370, and valine 414. Residues alanine 805, 805 to 806 (AF), leucine 1046, 1087 to 1090 (GSMG), glutamine 1202, and leucine 1266 contribute to the Mo-molybdopterin site. Glutamate 1268 (proton acceptor; for azaheterocycle hydroxylase activity) is an active-site residue.

This sequence belongs to the xanthine dehydrogenase family. As to quaternary structure, homodimer. The cofactor is [2Fe-2S] cluster. FAD is required as a cofactor. It depends on Mo-molybdopterin as a cofactor. In terms of tissue distribution, detected in liver, testis, kidney, brain, Harderian gland and olfactory mucosa.

Its subcellular location is the cytoplasm. The catalysed reaction is an aldehyde + O2 + H2O = a carboxylate + H2O2 + H(+). The enzyme catalyses retinal + O2 + H2O = retinoate + H2O2 + H(+). In terms of biological role, aldehyde oxidase able to catalyze the oxidation of retinaldehyde into retinoate. Acts as a negative modulator of the epidermal trophism. May be able to oxidize a wide variety of aldehydes into their corresponding carboxylates and to hydroxylate azaheterocycles. The polypeptide is Aldehyde oxidase 4 (AOX4) (Cavia porcellus (Guinea pig)).